Here is a 132-residue protein sequence, read N- to C-terminus: Protein C10 (132 aa).

A2 carries the post-translational modification N-acetylalanine.

It belongs to the UPF0456 family.

The protein localises to the cytoplasm. In brain, may be required for corpus callosum development. The polypeptide is Protein C10 (Bos taurus (Bovine)).